A 304-amino-acid polypeptide reads, in one-letter code: Non-specific ribonucleoside hydrolase RihC (304 aa).

His-233 is a catalytic residue.

This sequence belongs to the IUNH family. RihC subfamily.

Hydrolyzes both purine and pyrimidine ribonucleosides with a broad-substrate specificity. This is Non-specific ribonucleoside hydrolase RihC from Escherichia coli O157:H7.